A 465-amino-acid polypeptide reads, in one-letter code: ATP synthase subunit beta (465 aa).

Residue 148–155 (GGAGVGKT) participates in ATP binding.

The protein belongs to the ATPase alpha/beta chains family. In terms of assembly, F-type ATPases have 2 components, CF(1) - the catalytic core - and CF(0) - the membrane proton channel. CF(1) has five subunits: alpha(3), beta(3), gamma(1), delta(1), epsilon(1). CF(0) has three main subunits: a(1), b(2) and c(9-12). The alpha and beta chains form an alternating ring which encloses part of the gamma chain. CF(1) is attached to CF(0) by a central stalk formed by the gamma and epsilon chains, while a peripheral stalk is formed by the delta and b chains.

The protein localises to the cell inner membrane. It catalyses the reaction ATP + H2O + 4 H(+)(in) = ADP + phosphate + 5 H(+)(out). Functionally, produces ATP from ADP in the presence of a proton gradient across the membrane. The catalytic sites are hosted primarily by the beta subunits. This chain is ATP synthase subunit beta, found in Neisseria meningitidis serogroup C (strain 053442).